The chain runs to 1374 residues: Probable ATP-dependent RNA helicase spindle-E (1374 aa).

Residues 46-212 enclose the Helicase ATP-binding domain; it reads LARIRENPVI…FKTPKKVGYL (167 aa). ATP is bound at residue 59–66; the sequence is GPTGCGKT. The short motif at 158 to 161 is the DEAH box element; sequence DEIH. One can recognise a Helicase C-terminal domain in the interval 265-447; sequence VCDRLIENMH…NVILKAKLLE (183 aa). The 66-residue stretch at 866-931 folds into the Tudor domain; the sequence is QFAVGQMVAA…RKLDGPLAYM (66 aa).

It belongs to the DEAD box helicase family. DEAH subfamily.

It localises to the cytoplasm. The enzyme catalyses ATP + H2O = ADP + phosphate + H(+). In terms of biological role, probable ATP-binding RNA helicase which plays a central role during gametogenesis by repressing transposable elements and preventing their mobilization, which is essential for the germline integrity. Acts via the piRNA metabolic process, which mediates the repression of transposable elements during meiosis by forming complexes composed of piRNAs and Piwi proteins and govern the methylation and subsequent repression of transposons. The polypeptide is Probable ATP-dependent RNA helicase spindle-E (spn-E) (Aedes aegypti (Yellowfever mosquito)).